A 319-amino-acid polypeptide reads, in one-letter code: Lipoyl synthase (319 aa).

The segment at 1–32 (MVVLVDTVSSTPVRPRHPEKAARPDSLSPKKP) is disordered. A compositionally biased stretch (basic and acidic residues) spans 16–32 (RHPEKAARPDSLSPKKP). [4Fe-4S] cluster is bound by residues Cys-61, Cys-66, Cys-72, Cys-87, Cys-91, Cys-94, and Ser-300. In terms of domain architecture, Radical SAM core spans 73–289 (WDKKHATFMI…GKTAYAKGFL (217 aa)).

The protein belongs to the radical SAM superfamily. Lipoyl synthase family. [4Fe-4S] cluster is required as a cofactor.

The protein localises to the cytoplasm. It catalyses the reaction [[Fe-S] cluster scaffold protein carrying a second [4Fe-4S](2+) cluster] + N(6)-octanoyl-L-lysyl-[protein] + 2 oxidized [2Fe-2S]-[ferredoxin] + 2 S-adenosyl-L-methionine + 4 H(+) = [[Fe-S] cluster scaffold protein] + N(6)-[(R)-dihydrolipoyl]-L-lysyl-[protein] + 4 Fe(3+) + 2 hydrogen sulfide + 2 5'-deoxyadenosine + 2 L-methionine + 2 reduced [2Fe-2S]-[ferredoxin]. It participates in protein modification; protein lipoylation via endogenous pathway; protein N(6)-(lipoyl)lysine from octanoyl-[acyl-carrier-protein]: step 2/2. In terms of biological role, catalyzes the radical-mediated insertion of two sulfur atoms into the C-6 and C-8 positions of the octanoyl moiety bound to the lipoyl domains of lipoate-dependent enzymes, thereby converting the octanoylated domains into lipoylated derivatives. This is Lipoyl synthase from Rhodopseudomonas palustris (strain BisB5).